The primary structure comprises 440 residues: MDDLYLHFVQQLARYPFRKILLALSGGVDSQVLLALLARGRDEFGWDVTAVHVHHGLSPNADQWAQYCQRCCREVGMACQIEYVQLDVASGESIEKLAREARYRVLAPHVNAQTLLLLGQHADDQLETFLLALKRGSGPKGLAAMAAYAPFAEGHLLRPLLTVSRQHIEAYAKQHKLTWVIDESNADIRYERNFLRHQVTPVLTERWPSIRQAVQRSAELCAEQEALLQEFLAEALKKAITAEGGLSIAVLAEGSEGMRRQLIRAWFAHHRLPMPSRQHTERIWCEVALASEDANPKLKLNHIEVRRFQHCLYLVPPEKDLSGWRSALVPEQRLPLPQGLGHLQLTSKAGGNIKLPDDPSQLWVSFEPQGLEACPVGRVGSRKLKKLFQEYGVPSWRRRQTPILMYQNRVVCVADLFVDRDWSGQDCELVWFKSHDSVPK.

25 to 30 serves as a coordination point for ATP; sequence SGGVDS.

The protein belongs to the tRNA(Ile)-lysidine synthase family.

It is found in the cytoplasm. It catalyses the reaction cytidine(34) in tRNA(Ile2) + L-lysine + ATP = lysidine(34) in tRNA(Ile2) + AMP + diphosphate + H(+). Its function is as follows. Ligates lysine onto the cytidine present at position 34 of the AUA codon-specific tRNA(Ile) that contains the anticodon CAU, in an ATP-dependent manner. Cytidine is converted to lysidine, thus changing the amino acid specificity of the tRNA from methionine to isoleucine. This is tRNA(Ile)-lysidine synthase from Vibrio cholerae serotype O1 (strain ATCC 39315 / El Tor Inaba N16961).